Consider the following 179-residue polypeptide: Hypoxanthine-guanine phosphoribosyltransferase (179 aa).

Residues Lys-42 and Gly-43 each contribute to the diphosphate site. 2 residues coordinate Mg(2+): Glu-98 and Asp-99. The active-site Proton acceptor is Glu-102. Residues Lys-130, 151–152, and Asp-158 each bind GMP; that span reads FV. Residue Arg-164 participates in diphosphate binding.

It belongs to the purine/pyrimidine phosphoribosyltransferase family. The cofactor is Mg(2+).

It is found in the cytoplasm. It carries out the reaction IMP + diphosphate = hypoxanthine + 5-phospho-alpha-D-ribose 1-diphosphate. It catalyses the reaction GMP + diphosphate = guanine + 5-phospho-alpha-D-ribose 1-diphosphate. Its pathway is purine metabolism; IMP biosynthesis via salvage pathway; IMP from hypoxanthine: step 1/1. The protein operates within purine metabolism; GMP biosynthesis via salvage pathway; GMP from guanine: step 1/1. In terms of biological role, purine salvage pathway enzyme that catalyzes the transfer of the ribosyl-5-phosphate group from 5-phospho-alpha-D-ribose 1-diphosphate (PRPP) to the N9 position of the 6-oxopurines hypoxanthine and guanine to form the corresponding ribonucleotides IMP (inosine 5'-monophosphate) and GMP (guanosine 5'-monophosphate), with the release of PPi. In Staphylococcus aureus (strain COL), this protein is Hypoxanthine-guanine phosphoribosyltransferase (hpt).